We begin with the raw amino-acid sequence, 2073 residues long: Histone acetyltransferase KAT6B (2073 aa).

One can recognise an SAMD1-like winged helix (WH) domain in the interval 1–77 (MVKLANPLYT…LASYKDPDNP (77 aa)). Residues 72–97 (KDPDNPGRFSSVKPGTFPKSAKGSRG) form a disordered region. The H15 domain occupies 103-176 (RNVDWNKLLR…KDGPQYRVNY (74 aa)). 2 consecutive PHD-type zinc fingers follow at residues 213–272 (IPIC…CKTC) and 269–320 (CKTC…CRPK). Phosphoserine is present on serine 355. Disordered regions lie at residues 360–409 (EGSM…RPGA), 442–531 (FTPS…VPSL), 553–583 (TQGQ…TAKS), and 639–663 (VTPQ…PDQD). The negatively regulates HAT activity stretch occupies residues 361-717 (GSMNAFTGRG…ECESGVEDCG (357 aa)). The span at 379–399 (KVCTTPSSGHAASGKDSSSRL) shows a compositional bias: polar residues. A compositionally biased stretch (basic and acidic residues) spans 447–460 (DGRRSRGEIIDFSK). The segment covering 470 to 485 (QKQSCTSHVLATGTTQ) has biased composition (polar residues). The segment covering 488–499 (KPPPSSLPPPTP) has biased composition (pro residues). The segment covering 501–531 (SGQSPSSQKSSTATSSPSPQSSSSQCSVPSL) has biased composition (low complexity). Serine 647 carries the post-translational modification Phosphoserine. Lysine 673 is covalently cross-linked (Glycyl lysine isopeptide (Lys-Gly) (interchain with G-Cter in SUMO2)). Residues 715–989 (DCGRYPSVIE…LDPDSLRWTP (275 aa)) form the MYST-type HAT domain. A catalytic region spans residues 718 to 1008 (RYPSVIEFGK…EEEREAEKEA (291 aa)). The C2HC MYST-type zinc-finger motif lies at 748 to 773 (LYLCEFCLKYMKSKNILLRHSKKCGW). The interaction with BRPF1 stretch occupies residues 752 to 1008 (EFCLKYMKSK…EEEREAEKEA (257 aa)). Lysine 815 is subject to N6-acetyllysine; by autocatalysis. Residues 856–860 (SCIMI) and 865–871 (QRQGFGR) contribute to the acetyl-CoA site. Residue glutamate 891 is the Proton donor/acceptor of the active site. Acetyl-CoA is bound at residue serine 895. Disordered stretches follow at residues 1022-1452 (EQEI…FKEV), 1484-1538 (SCNS…MEID), and 1580-1619 (QSPQ…SPSV). Polar residues predominate over residues 1025-1043 (ILSTRANSRQSPAKVQSKN). Lysine 1038, lysine 1042, and lysine 1044 each carry N6-acetyllysine. Serine 1048 carries the post-translational modification Phosphoserine. Positions 1069 to 1105 (SEEEEEEEDEEEEEEEEEEEEDEEEEEEEEEEEEEEN) are enriched in acidic residues. Positions 1106–1117 (IQSSPPRLTKPQ) are enriched in polar residues. Residues 1121-1140 (IKRKRPFVLKKKRGRKRRRI) are compositionally biased toward basic residues. The segment covering 1142–1155 (SSVTTETISETTEV) has biased composition (low complexity). Positions 1187 to 1200 (PVLRKAFQHQPGKK) are enriched in basic residues. 3 stretches are compositionally biased toward basic and acidic residues: residues 1229-1243 (SNLK…EPLK), 1306-1315 (RIEEEVKETG), and 1341-1350 (EKPEDDLIKP). The span at 1351–1374 (EEEEEEEEEEEEEEEEEEGEEEEG) shows a compositional bias: acidic residues. Basic and acidic residues-rich tracts occupy residues 1378–1390 (VEKD…SQEK) and 1396–1407 (STEKEDSARLDD). Residues 1408-1417 (HEEEEEEDEE) are compositionally biased toward acidic residues. Positions 1433 to 1452 (HMESAEVEKEELPRESFKEV) are enriched in basic and acidic residues. The segment covering 1498–1507 (AVPESDEEPP) has biased composition (acidic residues). Over residues 1513-1529 (QKQDQKNSKEVDTEFKE) the composition is skewed to basic and acidic residues. The interaction with RUNX1 and RUNX2 stretch occupies residues 1560-2073 (QDCAETQEAC…QSLNGSYMRR (514 aa)). Polar residues predominate over residues 1580–1591 (QSPQIATTLDDC). Residues 1594–1611 (SDHSSPVSSVHSHPGQSV) show a composition bias toward low complexity.

This sequence belongs to the MYST (SAS/MOZ) family. In terms of assembly, component of the MOZ/MORF complex composed at least of ING5, KAT6A, KAT6B, MEAF6 and one of BRPF1, BRD1/BRPF2 and BRPF3. Interacts with RUNX1 and RUNX2. In terms of processing, autoacetylated. Autoacetylation at Lys-815 is required for proper function. As to expression, ubiquitously expressed, with high levels in heart, pancreas, testis and ovary.

The protein resides in the nucleus. The enzyme catalyses L-lysyl-[protein] + acetyl-CoA = N(6)-acetyl-L-lysyl-[protein] + CoA + H(+). Its function is as follows. Histone acetyltransferase which may be involved in both positive and negative regulation of transcription. Required for RUNX2-dependent transcriptional activation. May be involved in cerebral cortex development. Component of the MOZ/MORF complex which has a histone H3 acetyltransferase activity. This Homo sapiens (Human) protein is Histone acetyltransferase KAT6B (KAT6B).